The following is a 407-amino-acid chain: MKSFFKPVIIKKFLWTLFFLFIYVLGTKLTLPFVDMSKAAAMDGTSTTLNYATALMGGNLRSMSLFSVGLSPWMSSMLIWQMFAVSKRLGLSKLPLEVQERRRMLLTLVIALIQSVALVLNLPLQEAAGVDMTTIMVLDTLVLMAGTYFLIWLTDLNAAMGLGGSIMIVMASMIAYIPQDIWNSIQELKISSLWLALMLVFSLVFLYLAVTVERSKYRIPVNKINIHNRFKKYSYLDIRLNPAGGMPIMYAMTLVSIPQYFLLIIHFLQPENQLIEQWIEALSMGSPAWFILYLLTIFILALAFAFINISGDQIAERMQKSGEYIENVYPGGATRRYINGLVTYFALVGAFYLILISGLPMMVVLVDIRYLRLSMIPGIFMIFIGMVFSIKDEVEALTLNDRYRSLL.

Helical transmembrane passes span 13–33 (FLWT…TLPF), 65–85 (LFSV…MFAV), 104–124 (MLLT…NLPL), 133–153 (TTIM…LIWL), 158–178 (AAMG…AYIP), 190–210 (ISSL…YLAV), 248–268 (IMYA…IHFL), 287–307 (PAWF…FAFI), 345–365 (FALV…MVVL), and 370–390 (YLRL…VFSI).

Belongs to the SecY/SEC61-alpha family. SecY2 subfamily. Component of the accessory SecA2/SecY2 protein translocase complex required to export cell wall proteins. May form heterotrimers with SecE and SecG subunits.

It is found in the cell membrane. Part of the accessory SecA2/SecY2 system specifically required for export of possible cell wall proteins. The central subunit of a protein translocation channel. The polypeptide is Accessory Sec system protein translocase subunit SecY2 (Streptococcus sanguinis (strain SK36)).